The following is a 138-amino-acid chain: Mini-ribonuclease 3 (138 aa).

Residue D33 is part of the active site.

The protein belongs to the MrnC RNase family. Homodimer. It depends on Mg(2+) as a cofactor.

The protein resides in the cytoplasm. Its function is as follows. Involved in correct processing of both the 5' and 3' ends of 23S rRNA precursor. Processes 30S rRNA precursor transcript even in absence of ribonuclease 3 (Rnc); Rnc processes 30S rRNA into smaller rRNA precursors. The protein is Mini-ribonuclease 3 of Synechococcus sp. (strain ATCC 27144 / PCC 6301 / SAUG 1402/1) (Anacystis nidulans).